Consider the following 641-residue polypeptide: Threonine--tRNA ligase (641 aa).

The TGS domain occupies 1 to 61 (MIKISFFDNQ…KKNGNLEILT (61 aa)). The tract at residues 240–538 (DHKKINKELD…LVEETKGVFP (299 aa)) is catalytic. Cysteine 334, histidine 385, and histidine 515 together coordinate Zn(2+).

It belongs to the class-II aminoacyl-tRNA synthetase family. Homodimer. The cofactor is Zn(2+).

The protein resides in the cytoplasm. It catalyses the reaction tRNA(Thr) + L-threonine + ATP = L-threonyl-tRNA(Thr) + AMP + diphosphate + H(+). Functionally, catalyzes the attachment of threonine to tRNA(Thr) in a two-step reaction: L-threonine is first activated by ATP to form Thr-AMP and then transferred to the acceptor end of tRNA(Thr). Also edits incorrectly charged L-seryl-tRNA(Thr). This is Threonine--tRNA ligase from Aster yellows witches'-broom phytoplasma (strain AYWB).